The chain runs to 1030 residues: Leucine-rich repeat and coiled-coil domain-containing protein 1 (1030 aa).

LRR repeat units follow at residues R7 to S28, N29 to C50, Y51 to A72, S73 to F94, N95 to H116, and K121 to T142. Residues N160–M200 form the LRRCT domain. A disordered region spans residues K298 to I401. The segment covering E300–D311 has biased composition (basic and acidic residues). Composition is skewed to polar residues over residues K338–Q368 and E378–Q393. Residues R432 to L645 adopt a coiled-coil conformation.

It belongs to the LRRCC1 family.

The protein resides in the cytoplasm. Its subcellular location is the cytoskeleton. It is found in the microtubule organizing center. It localises to the centrosome. The protein localises to the centriole. Required for the organization of the mitotic spindle. Maintains the structural integrity of centrosomes during mitosis. This chain is Leucine-rich repeat and coiled-coil domain-containing protein 1 (lrrcc1), found in Xenopus laevis (African clawed frog).